A 448-amino-acid chain; its full sequence is Pre-mRNA-splicing factor SAD1 (448 aa).

M1 carries the N-acetylmethionine modification. The segment at 27–124 (PNYAYLETVV…NSIKFAAYPT (98 aa)) adopts a UBP-type; degenerate zinc-finger fold. Residues C60, C63, H79, and H85 each coordinate Zn(2+). A USP domain is found at 150-447 (IGFTNAATYD…ETFIQVWEKQ (298 aa)).

In terms of assembly, component of the 45S U1.U2.U4/U6.U5 penta-snRNP particle, a subcomplex of the spliceosome.

It is found in the nucleus. Promotes the assembly of newly synthesized U4 snRNA into the U4/U6 snRNP particle. Required for splicing of pre-mRNA. The sequence is that of Pre-mRNA-splicing factor SAD1 (SAD1) from Saccharomyces cerevisiae (strain ATCC 204508 / S288c) (Baker's yeast).